The primary structure comprises 331 residues: Ornithine carbamoyltransferase (331 aa).

Carbamoyl phosphate contacts are provided by residues 55–58, Gln-82, Arg-106, and 133–136; these read STRT and HPTQ. Residues Asn-166, Asp-230, and 234 to 235 each bind L-ornithine; that span reads SM. Carbamoyl phosphate-binding positions include 272–273 and Arg-317; that span reads CL.

This sequence belongs to the aspartate/ornithine carbamoyltransferase superfamily. OTCase family.

It localises to the cytoplasm. The enzyme catalyses carbamoyl phosphate + L-ornithine = L-citrulline + phosphate + H(+). The protein operates within amino-acid biosynthesis; L-arginine biosynthesis; L-arginine from L-ornithine and carbamoyl phosphate: step 1/3. Functionally, reversibly catalyzes the transfer of the carbamoyl group from carbamoyl phosphate (CP) to the N(epsilon) atom of ornithine (ORN) to produce L-citrulline. This Neisseria meningitidis serogroup A / serotype 4A (strain DSM 15465 / Z2491) protein is Ornithine carbamoyltransferase (argF).